The sequence spans 151 residues: Deoxyuridine 5'-triphosphate nucleotidohydrolase (151 aa).

Residues 70–72 (RSG), N83, 87–89 (LID), and M97 each bind substrate.

Belongs to the dUTPase family. Mg(2+) serves as cofactor.

The enzyme catalyses dUTP + H2O = dUMP + diphosphate + H(+). It functions in the pathway pyrimidine metabolism; dUMP biosynthesis; dUMP from dCTP (dUTP route): step 2/2. This enzyme is involved in nucleotide metabolism: it produces dUMP, the immediate precursor of thymidine nucleotides and it decreases the intracellular concentration of dUTP so that uracil cannot be incorporated into DNA. The sequence is that of Deoxyuridine 5'-triphosphate nucleotidohydrolase from Pseudomonas putida (strain ATCC 47054 / DSM 6125 / CFBP 8728 / NCIMB 11950 / KT2440).